The primary structure comprises 168 residues: ATP synthase subunit b (168 aa).

The helical transmembrane segment at 9–29 (LFNLSTFVFTIINLLVLYYIL) threads the bilayer.

This sequence belongs to the ATPase B chain family. As to quaternary structure, F-type ATPases have 2 components, F(1) - the catalytic core - and F(0) - the membrane proton channel. F(1) has five subunits: alpha(3), beta(3), gamma(1), delta(1), epsilon(1). F(0) has three main subunits: a(1), b(2) and c(10-14). The alpha and beta chains form an alternating ring which encloses part of the gamma chain. F(1) is attached to F(0) by a central stalk formed by the gamma and epsilon chains, while a peripheral stalk is formed by the delta and b chains.

Its subcellular location is the cell membrane. In terms of biological role, f(1)F(0) ATP synthase produces ATP from ADP in the presence of a proton or sodium gradient. F-type ATPases consist of two structural domains, F(1) containing the extramembraneous catalytic core and F(0) containing the membrane proton channel, linked together by a central stalk and a peripheral stalk. During catalysis, ATP synthesis in the catalytic domain of F(1) is coupled via a rotary mechanism of the central stalk subunits to proton translocation. Its function is as follows. Component of the F(0) channel, it forms part of the peripheral stalk, linking F(1) to F(0). The sequence is that of ATP synthase subunit b from Caldanaerobacter subterraneus subsp. tengcongensis (strain DSM 15242 / JCM 11007 / NBRC 100824 / MB4) (Thermoanaerobacter tengcongensis).